Consider the following 218-residue polypeptide: Wtf element wtf7 (218 aa).

Residues 1 to 23 (MLKMSGSYAPVEDSADELSVHSG) form a disordered region. Transmembrane regions (helical) follow at residues 122–142 (LAQV…CLFF), 152–172 (LMGW…SFIL), and 191–211 (AGIL…FYGI).

Belongs to the WTF family.

It localises to the spore membrane. Functionally, may act in meiotic drive. In Schizosaccharomyces kambucha (Fission yeast), this protein is Wtf element wtf7.